Here is a 391-residue protein sequence, read N- to C-terminus: Phosphoglycerate kinase (391 aa).

Substrate-binding positions include 21–23 (DLN), R36, 59–62 (HLGR), R113, and R146. Residues K197, E319, and 345 to 348 (GGDT) contribute to the ATP site.

The protein belongs to the phosphoglycerate kinase family. In terms of assembly, monomer.

It localises to the cytoplasm. The enzyme catalyses (2R)-3-phosphoglycerate + ATP = (2R)-3-phospho-glyceroyl phosphate + ADP. The protein operates within carbohydrate degradation; glycolysis; pyruvate from D-glyceraldehyde 3-phosphate: step 2/5. The protein is Phosphoglycerate kinase of Shewanella baltica (strain OS223).